Reading from the N-terminus, the 346-residue chain is MAFRIASSPFTHNRQTTRQIMIQVMLACLPGLMALTTFFGSGIIIQLVIACVTALVAEGVVLTLRRQPLASRLGDGSALLTALLLALSLPPLGPWWMMVLATAFAIVIAKQLYGGLGHNPFNPAMVGYVVLLISFPVQMTSWSPQQSLLLHPVSLTDSMALIFTGVTPDGLTLTQLRATVDGITQATPLDGFKTGLRTGAMTAFHHRWDWQASAGWTWANIGFLLGGLYLIWRRVISWHIPLSLLAAMLIGAGLGHWLAPVVSAPPLLHLFSGATMLGAFFIATDPVTAAATVRGRVIFGALTGLLVWLIRTWGGYPDGVAFAVLLANICVPLIDHYTQPRAYGHR.

4 consecutive transmembrane segments (helical) span residues 20–40, 42–62, 69–91, and 120–140; these read IMIQ…TFFG, GIII…GVVL, LASR…SLPP, and PFNP…VQMT. Thr-187 carries the FMN phosphoryl threonine modification. The next 5 membrane-spanning stretches (helical) occupy residues 212–232, 242–262, 264–284, 290–310, and 314–334; these read ASAG…YLIW, LSLL…APVV, APPL…FIAT, AATV…VWLI, and GGYP…VPLI.

This sequence belongs to the NqrB/RnfD family. As to quaternary structure, the complex is composed of six subunits: RnfA, RnfB, RnfC, RnfD, RnfE and RnfG. FMN serves as cofactor.

It localises to the cell inner membrane. Part of a membrane-bound complex that couples electron transfer with translocation of ions across the membrane. This chain is Ion-translocating oxidoreductase complex subunit D, found in Sodalis glossinidius (strain morsitans).